We begin with the raw amino-acid sequence, 87 residues long: Small ribosomal subunit protein uS17 (87 aa).

This sequence belongs to the universal ribosomal protein uS17 family. In terms of assembly, part of the 30S ribosomal subunit.

In terms of biological role, one of the primary rRNA binding proteins, it binds specifically to the 5'-end of 16S ribosomal RNA. The polypeptide is Small ribosomal subunit protein uS17 (Staphylococcus aureus (strain JH1)).